The chain runs to 400 residues: Carnosine N-methyltransferase (400 aa).

The interval 1–51 (MQRRQRAPPASQPAQDGGRSEDVEVQFSAGRLGSAAPAGPPARGTAEDEER) is disordered. Over residues 28–44 (SAGRLGSAAPAGPPARG) the composition is skewed to low complexity. Residues Q155, R158, G199, E220, D286, F287, and C303 each coordinate S-adenosyl-L-methionine. D307 serves as a coordination point for carnosine. Residue Y315 coordinates S-adenosyl-L-methionine. Carnosine-binding residues include H338 and Y389.

This sequence belongs to the carnosine N-methyltransferase family. Homodimer. Each monomer accommodates one molecule of carnosine in its active pocket, precisely anchoring the histidine imidazole ring such that only N1 is exposed and deprotonated for methylation.

The protein resides in the cytoplasm. The protein localises to the cytosol. It localises to the nucleus. The enzyme catalyses carnosine + S-adenosyl-L-methionine = anserine + S-adenosyl-L-homocysteine + H(+). Its function is as follows. N-methyltransferase that catalyzes the formation of anserine (beta-alanyl-N(Pi)-methyl-L-histidine) from carnosine. Anserine, a methylated derivative of carnosine (beta-alanyl-L-histidine), is an abundant constituent of vertebrate skeletal muscles. Also methylates other L-histidine-containing di- and tripeptides such as Gly-Gly-His, Gly-His and homocarnosine (GABA-His). This Mus musculus (Mouse) protein is Carnosine N-methyltransferase.